We begin with the raw amino-acid sequence, 103 residues long: Phosphoribosyl-ATP pyrophosphatase (103 aa).

Belongs to the PRA-PH family.

Its subcellular location is the cytoplasm. It catalyses the reaction 1-(5-phospho-beta-D-ribosyl)-ATP + H2O = 1-(5-phospho-beta-D-ribosyl)-5'-AMP + diphosphate + H(+). Its pathway is amino-acid biosynthesis; L-histidine biosynthesis; L-histidine from 5-phospho-alpha-D-ribose 1-diphosphate: step 2/9. The sequence is that of Phosphoribosyl-ATP pyrophosphatase from Listeria monocytogenes serotype 4b (strain CLIP80459).